We begin with the raw amino-acid sequence, 65 residues long: Metallothionein-like protein 3B (65 aa).

It belongs to the metallothionein superfamily. Type 15 family. Expressed in leaves and rachis.

In terms of biological role, metallothioneins have a high content of cysteine residues that bind various heavy metals. This chain is Metallothionein-like protein 3B (MT3B), found in Oryza sativa subsp. japonica (Rice).